Here is a 185-residue protein sequence, read N- to C-terminus: Sarcoplasmic calcium-binding proteins I, III, and IV (185 aa).

EF-hand domains follow at residues 5-41 (FQKQKIKFTFDFFLDYNKDGSIQWEDFEEMIKRYKEV), 57-92 (SLEDEWRDLKGRADINKDDVVSWEEYLAMWEKTIAT), 102-137 (WCQNRIPFLFKGMDVSGDGIVDLEEFQNYCKNFQLQ), and 138-173 (CADVPAVYNVITDGGKVTFDLNRYKELYYRLLTSPA). 13 residues coordinate Ca(2+): D19, N21, D23, S25, D30, D70, N72, D74, E81, D115, S117, D119, and E126.

Like parvalbumins, SCPs seem to be more abundant in fast contracting muscles, but no functional relationship can be established from this distribution. The polypeptide is Sarcoplasmic calcium-binding proteins I, III, and IV (Branchiostoma lanceolatum (Common lancelet)).